We begin with the raw amino-acid sequence, 515 residues long: Phospholipase A1-Igamma1, chloroplastic (515 aa).

A chloroplast-targeting transit peptide spans 1–44 (MATIPSHNLRPHTTNQRTQYSLSFRPHFSRSTLITFPARSSPAR). Residues 301–305 (GHSLG) carry the GXSXG motif. Ser-303 acts as the Acyl-ester intermediate in catalysis. Active-site charge relay system residues include Asp-366 and His-422.

Belongs to the AB hydrolase superfamily. Lipase family. As to expression, ubiquitous. Highly expressed in leaves.

It localises to the plastid. It is found in the chloroplast. It carries out the reaction 1,2-dihexadecanoyl-sn-glycero-3-phosphocholine + H2O = 2-hexadecanoyl-sn-glycero-3-phosphocholine + hexadecanoate + H(+). The catalysed reaction is a 1,2-diacyl-3-O-(beta-D-galactosyl)-sn-glycerol + H2O = an acyl-3-O-(beta-D-galactosyl)-sn-glycerol + a fatty acid + H(+). It catalyses the reaction a 1,2-diacyl-3-O-[alpha-D-galactosyl-(1-&gt;6)-beta-D-galactosyl]-sn-glycerol + H2O = acyl-3-O-[alpha-D-galactosyl-(1-&gt;6)-beta-D-galactosyl]-sn-glycerol + a fatty acid + H(+). Functionally, acylhydrolase with a broad specificity. Catalyzes the hydrolysis of phosphatidylcholine at the sn-1 position. Moderate activity toward phosphatidylcholine (PC), monogalactosyldiacylglycerol (MGDG), digalactosyldiacylglycerol (DGDG) and triacylglycerol (TAG). May display dual sn-1/sn-2 substrate specificity. Could be involved in early wound response. This is Phospholipase A1-Igamma1, chloroplastic from Arabidopsis thaliana (Mouse-ear cress).